The chain runs to 619 residues: Tyrosine-protein kinase ZAP-70 (619 aa).

The region spanning 10–102 (FFYGSISRAE…GLPCNLRKPC (93 aa)) is the SH2 1 domain. The segment at 103–162 (NRPSGLEPQPGVFDCLRDAMVRDYVRQTWKLEGEALEQAIISQAPQVEKLIATTAHERMP) is interdomain A. Positions 163–254 (WYHSSLTREE…GLIYCLKEAC (92 aa)) constitute an SH2 2 domain. A Phosphotyrosine modification is found at Tyr-248. Positions 255–337 (PNSSASNASG…KKLFLKRDNL (83 aa)) are interdomain B. A disordered region spans residues 260–309 (SNASGAAAPTLPAHPSTLTHPQRRIDTLNSDGYTPEPARITSPDKPRPMP). At Ser-289 the chain carries Phosphoserine. Tyr-292 bears the Phosphotyrosine mark. The residue at position 315 (Tyr-315) is a Phosphotyrosine; by LCK. Tyr-319 carries the post-translational modification Phosphotyrosine. The region spanning 338 to 600 (LIADIELGCG…QRMRACYYSL (263 aa)) is the Protein kinase domain. ATP contacts are provided by residues 345 to 352 (GCGNFGSV) and Lys-369. Catalysis depends on Asp-461, which acts as the Proton acceptor. A phosphotyrosine mark is found at Tyr-492 and Tyr-493. Lys-544 is covalently cross-linked (Glycyl lysine isopeptide (Lys-Gly) (interchain with G-Cter in ubiquitin)). N6-acetyllysine is present on Lys-603.

The protein belongs to the protein kinase superfamily. Tyr protein kinase family. SYK/ZAP-70 subfamily. In terms of assembly, interacts with CD247/CD3Z; this interaction docks ZAP70 at the stimulated TCR. Interacts with NFAM1. Interacts with adapter protein SLA; this interaction negatively regulates T-cell receptor signaling. Interacts with FCRL3. Interacts with VAV1. Interacts with CBL; this interaction promotes ubiquitination, internalization and subsequent degradation of CD247/CD3Z. Identified in a complex with CBL and UBE2L3. Interacts with SHB. Interacts with adapter protein SLA2; this interaction negatively regulates T-cell receptor signaling. Interacts with CBLB. Interacts (via SH2 domains) with RHOH; this interaction regulates ZAP70 subcellular localization. Interacts with DEF6. Interacts (ubiquitinated form) with OTUD7B and UBASH3B. Phosphorylated on tyrosine residues upon T-cell antigen receptor (TCR) stimulation. Phosphorylation of Tyr-315 and Tyr-319 are essential for ZAP70 positive function on T-lymphocyte activation whereas Tyr-292 has a negative regulatory role. Within the C-terminal kinase domain, Tyr-492 and Tyr-493 are phosphorylated after TCR induction, Tyr-492 playing a negative regulatory role and Tyr-493 a positive. Tyr-493 is dephosphorylated by PTN22. In terms of processing, ubiquitinated in response to T cell activation. Deubiquitinated by OTUD7B. Expressed in T- and natural killer cells. Also present in early thymocytes and pro/pre B-cells.

The protein localises to the cytoplasm. It localises to the cell membrane. It carries out the reaction L-tyrosyl-[protein] + ATP = O-phospho-L-tyrosyl-[protein] + ADP + H(+). Activated by phosphorylation at Tyr-493 in the activation loop. Inhibited by staurosporine. Its function is as follows. Tyrosine kinase that plays an essential role in regulation of the adaptive immune response. Regulates motility, adhesion and cytokine expression of mature T-cells, as well as thymocyte development. Also contributes to the development and activation of primary B-lymphocytes. When antigen presenting cells (APC) activate T-cell receptor (TCR), a serie of phosphorylations lead to the recruitment of ZAP70 to the doubly phosphorylated TCR component CD247/CD3Z through ITAM motif at the plasma membrane. This recruitment serves to localization to the stimulated TCR and to relieve its autoinhibited conformation. Release of ZAP70 active conformation is further stabilized by phosphorylation mediated by LCK. Subsequently, ZAP70 phosphorylates at least 2 essential adapter proteins: LAT and LCP2. In turn, a large number of signaling molecules are recruited and ultimately lead to lymphokine production, T-cell proliferation and differentiation. Furthermore, ZAP70 controls cytoskeleton modifications, adhesion and mobility of T-lymphocytes, thus ensuring correct delivery of effectors to the APC. ZAP70 is also required for TCR-CD247/CD3Z internalization and degradation through interaction with the E3 ubiquitin-protein ligase CBL and adapter proteins SLA and SLA2. Thus, ZAP70 regulates both T-cell activation switch on and switch off by modulating TCR expression at the T-cell surface. During thymocyte development, ZAP70 promotes survival and cell-cycle progression of developing thymocytes before positive selection (when cells are still CD4/CD8 double negative). Additionally, ZAP70-dependent signaling pathway may also contribute to primary B-cells formation and activation through B-cell receptor (BCR). This is Tyrosine-protein kinase ZAP-70 (ZAP70) from Homo sapiens (Human).